A 263-amino-acid chain; its full sequence is Acetylglutamate kinase (263 aa).

Residues 48 to 49 (GG), arginine 70, and asparagine 162 contribute to the substrate site.

Belongs to the acetylglutamate kinase family. ArgB subfamily.

The protein resides in the cytoplasm. The catalysed reaction is N-acetyl-L-glutamate + ATP = N-acetyl-L-glutamyl 5-phosphate + ADP. It functions in the pathway amino-acid biosynthesis; L-arginine biosynthesis; N(2)-acetyl-L-ornithine from L-glutamate: step 2/4. Catalyzes the ATP-dependent phosphorylation of N-acetyl-L-glutamate. The polypeptide is Acetylglutamate kinase (Vibrio parahaemolyticus serotype O3:K6 (strain RIMD 2210633)).